Here is a 523-residue protein sequence, read N- to C-terminus: Bifunctional purine biosynthesis protein PurH (523 aa).

The 149-residue stretch at 4 to 152 (DHIRRPIRRA…KNHPSVAVVT (149 aa)) folds into the MGS-like domain.

The protein belongs to the PurH family.

The catalysed reaction is (6R)-10-formyltetrahydrofolate + 5-amino-1-(5-phospho-beta-D-ribosyl)imidazole-4-carboxamide = 5-formamido-1-(5-phospho-D-ribosyl)imidazole-4-carboxamide + (6S)-5,6,7,8-tetrahydrofolate. It catalyses the reaction IMP + H2O = 5-formamido-1-(5-phospho-D-ribosyl)imidazole-4-carboxamide. It functions in the pathway purine metabolism; IMP biosynthesis via de novo pathway; 5-formamido-1-(5-phospho-D-ribosyl)imidazole-4-carboxamide from 5-amino-1-(5-phospho-D-ribosyl)imidazole-4-carboxamide (10-formyl THF route): step 1/1. The protein operates within purine metabolism; IMP biosynthesis via de novo pathway; IMP from 5-formamido-1-(5-phospho-D-ribosyl)imidazole-4-carboxamide: step 1/1. The chain is Bifunctional purine biosynthesis protein PurH from Mycobacterium ulcerans (strain Agy99).